Consider the following 797-residue polypeptide: MENGGTRTQQIRQVLLLFVLLGMSQAGSETWSFSVAEEMQSGSFVGNLAKDLGLKVRELSSRGARVVSNDKKQRLQLDINTGDVLLSETLDREELCGSIEPCVLHFQVLMQNPTQFLQIELQVRDINDHSPIFLEKQMLLEIPENSPVGAVFLLESAKDLDVGINAVKSYTISPNSHFHIKMRVNPDNRKYPELVLDKALDYEELPELSFILTALDGGSPPRSGTALVRVVVVDINDNSPEFEQAFYEVKIPENSILGSLILTVSAWDLDSGTNGEICYTLSHASEDIRKTFEINQKSGDITLTAPLDFETIESYSIIIQATDRGGLFGKSTVRIQVIDVNDNAPEITVSSITSPIPENTPETVVMVFSIQDIDSGDNGRIVCSIPEDLPFVLKSSVENYYTLETERPLDRESTAEYNITITVTDLGIPRLKTEHNTTVLVSDVNDNAPTFTQTSYTLFVSENNSPALHIGSVSATDRDSGTNAQVNYSLLPPQDPHLPLASLVSINADNGHLFALRSLDYEALQAFEFRVGATDRGSPALSSEALVRVLVLDANDNSPFVLYPLQNGSAPCTELVPRAAEPGYLVTKVVAVDGDSGQNAWLSYQLLKATEPGLFXVWAHNGEVRTARLLSERDAAKHRLVVLVKDNGEPPRSATATLHVLLVDGFSQPFLPLPEAAPAQAQTDFLTVYLVVALASVSSLFFFSVLLFVAVRLCRRSRAASVGSCSVPKGPFPGHLVDVSGTGTLSQSYQYEVCLTGGSETNEFKFLKPVIPNIQAKGLGKNSEENSTFQNSFGFNF.

A signal peptide spans 1-26; the sequence is MENGGTRTQQIRQVLLLFVLLGMSQA. At 27–690 the chain is on the extracellular side; it reads GSETWSFSVA…AQTDFLTVYL (664 aa). 5 consecutive Cadherin domains span residues 35–133, 138–242, 247–347, 352–451, and 456–561; these read VAEE…SPIF, MLLE…SPEF, YEVK…APEI, ITSP…APTF, and YTLF…SPFV. 4 N-linked (GlcNAc...) asparagine glycosylation sites follow: N418, N436, N487, and N567. Positions 568–671 constitute a Cadherin 6 domain; sequence GSAPCTELVP…LVDGFSQPFL (104 aa). A helical membrane pass occupies residues 691–711; that stretch reads VVALASVSSLFFFSVLLFVAV. Over 712-797 the chain is Cytoplasmic; sequence RLCRRSRAAS…TFQNSFGFNF (86 aa).

It is found in the cell membrane. In terms of biological role, potential calcium-dependent cell-adhesion protein. May be involved in the establishment and maintenance of specific neuronal connections in the brain. The protein is Protocadherin beta-11 (PCDHB11) of Pan troglodytes (Chimpanzee).